The following is a 341-amino-acid chain: Mitochondrial transcription factor 1 (341 aa).

S-adenosyl-L-methionine is bound by residues Leu-23, Glu-77, Asp-101, and Asn-137.

The protein belongs to the class I-like SAM-binding methyltransferase superfamily. rRNA adenine N(6)-methyltransferase family.

It localises to the mitochondrion intermembrane space. Functionally, mitochondrial transcription factor that confers selective promoter recognition on the core subunit of the yeast mitochondrial RNA polymerase. Interacts with DNA in a non-specific manner. This is Mitochondrial transcription factor 1 (MTF1) from Saccharomyces cerevisiae (strain ATCC 204508 / S288c) (Baker's yeast).